Here is a 491-residue protein sequence, read N- to C-terminus: Proline--tRNA ligase (491 aa).

It belongs to the class-II aminoacyl-tRNA synthetase family. ProS type 3 subfamily. As to quaternary structure, homodimer.

Its subcellular location is the cytoplasm. The enzyme catalyses tRNA(Pro) + L-proline + ATP = L-prolyl-tRNA(Pro) + AMP + diphosphate. In terms of biological role, catalyzes the attachment of proline to tRNA(Pro) in a two-step reaction: proline is first activated by ATP to form Pro-AMP and then transferred to the acceptor end of tRNA(Pro). The sequence is that of Proline--tRNA ligase from Cytophaga hutchinsonii (strain ATCC 33406 / DSM 1761 / CIP 103989 / NBRC 15051 / NCIMB 9469 / D465).